The primary structure comprises 440 residues: tRNA-2-methylthio-N(6)-dimethylallyladenosine synthase (440 aa).

Positions 3–119 (KKFFIKTFGC…LPELINQAQA (117 aa)) constitute an MTTase N-terminal domain. Residues C12, C48, C82, C158, C162, and C165 each coordinate [4Fe-4S] cluster. One can recognise a Radical SAM core domain in the interval 144-374 (RDNKYCAYVT…LELQKSILSE (231 aa)). In terms of domain architecture, TRAM spans 377-437 (KKYEGTVQEV…PFSLEGELLE (61 aa)).

Belongs to the methylthiotransferase family. MiaB subfamily. Monomer. [4Fe-4S] cluster is required as a cofactor.

The protein localises to the cytoplasm. It catalyses the reaction N(6)-dimethylallyladenosine(37) in tRNA + (sulfur carrier)-SH + AH2 + 2 S-adenosyl-L-methionine = 2-methylsulfanyl-N(6)-dimethylallyladenosine(37) in tRNA + (sulfur carrier)-H + 5'-deoxyadenosine + L-methionine + A + S-adenosyl-L-homocysteine + 2 H(+). Functionally, catalyzes the methylthiolation of N6-(dimethylallyl)adenosine (i(6)A), leading to the formation of 2-methylthio-N6-(dimethylallyl)adenosine (ms(2)i(6)A) at position 37 in tRNAs that read codons beginning with uridine. The sequence is that of tRNA-2-methylthio-N(6)-dimethylallyladenosine synthase from Aquifex aeolicus (strain VF5).